The following is a 1956-amino-acid chain: Probable cation-transporting ATPase 1 (1956 aa).

The Cytoplasmic segment spans residues 1-35; sequence MHLMCTGLRNEKLINDRKILYGECNLNIKSDSFII. Residues 36–58 form a helical membrane-spanning segment; it reads LLFKEIMNPFFIFQIFAMIVWSL. Topologically, residues 59–61 are extracellular; that stretch reads DNY. Residues 62–80 form a helical membrane-spanning segment; it reads IEYTISILFITSISIILEL. Over 81 to 407 the chain is Cytoplasmic; sequence KNTIKNQKKI…KKELNLINDS (327 aa). The chain crosses the membrane as a helical span at residues 408–427; sequence YKFLIILIIYALFSVFILLY. The Extracellular portion of the chain corresponds to 428–440; the sequence is ITLSNNEYTNHII. A helical transmembrane segment spans residues 441-462; that stretch reads IKCLDIITDAIPPALPTTLTVG. The Cytoplasmic segment spans residues 463–1818; sequence ISIAISRLKK…SLVNSFQLFK (1356 aa). Catalysis depends on Asp496, which acts as the 4-aspartylphosphate intermediate. Residues 901-938 form a disordered region; that stretch reads YGNNNDDNNDDDNNNDDDNNDDNNNDDNNNDDNNDDNN. Residues 907 to 935 are compositionally biased toward acidic residues; sequence DNNDDDNNNDDDNNDDNNNDDNNNDDNND. Asp1760 and Asp1764 together coordinate Mg(2+). A helical transmembrane segment spans residues 1819–1837; that stretch reads FISLYSIMQCSQVLILYSI. The Extracellular segment spans residues 1838-1845; it reads SNKLTDNQ. The helical transmembrane segment at 1846 to 1863 threads the bilayer; it reads YIFIDIVTILPLSIFMCW. Topologically, residues 1864–1881 are cytoplasmic; the sequence is TSASEKLSKNIPIGKLFS. Residues 1882–1905 form a helical membrane-spanning segment; it reads FPILISIYGQIIIQLFFVMISLVV. Over 1906-1928 the chain is Extracellular; that stretch reads LMNLSFYKYDKNKVMKEKSDDTY. The chain crosses the membrane as a helical span at residues 1929-1952; it reads LYKAQKYTLIYSLLFSKFVYVYIF. The Cytoplasmic segment spans residues 1953 to 1956; the sequence is KYKE.

This sequence belongs to the cation transport ATPase (P-type) (TC 3.A.3) family. Type V subfamily.

It is found in the membrane. It catalyses the reaction ATP + H2O = ADP + phosphate + H(+). This Plasmodium falciparum protein is Probable cation-transporting ATPase 1.